A 576-amino-acid polypeptide reads, in one-letter code: Lysine--tRNA ligase, mitochondrial (576 aa).

A mitochondrion-targeting transit peptide spans 1–30 (MNVLLKRRSLTFAPRWLWCKCRSSRSRPYS).

Belongs to the class-II aminoacyl-tRNA synthetase family.

It is found in the mitochondrion matrix. It catalyses the reaction tRNA(Lys) + L-lysine + ATP = L-lysyl-tRNA(Lys) + AMP + diphosphate. In terms of biological role, catalyzes the attachment of lysine to tRNA(Lys) in the mitochondrion. This Saccharomyces cerevisiae (strain ATCC 204508 / S288c) (Baker's yeast) protein is Lysine--tRNA ligase, mitochondrial (MSK1).